Reading from the N-terminus, the 126-residue chain is Regulatory protein MgsR (126 aa).

A disulfide bridge connects residues Cys-13 and Cys-16.

The protein belongs to the ArsC family.

It is found in the cytoplasm. With respect to regulation, activity is controlled at multiple levels. Regulation includes a positive autoregulatory loop on mgsR transcription and a post-translational redox-sensitive activation step by an intramolecular disulfide bond formation in response to ethanol stress. In addition, protein stability is strictly controlled by rapid proteolytic degradation by the ClpXP and ClpCP proteases. The McsB protein-arginine kinase might serve as a proteolytic adapter for the ClpX ATPase in the degradation mechanism of MgsR. Its function is as follows. Regulates transcription of a subregulon within the general stress response. Exerts positive and negative effects in response to ethanol stress. In Bacillus subtilis (strain 168), this protein is Regulatory protein MgsR.